Consider the following 292-residue polypeptide: ATP synthase gamma chain (292 aa).

This sequence belongs to the ATPase gamma chain family. As to quaternary structure, F-type ATPases have 2 components, CF(1) - the catalytic core - and CF(0) - the membrane proton channel. CF(1) has five subunits: alpha(3), beta(3), gamma(1), delta(1), epsilon(1). CF(0) has three main subunits: a, b and c.

It localises to the cell membrane. In terms of biological role, produces ATP from ADP in the presence of a proton gradient across the membrane. The gamma chain is believed to be important in regulating ATPase activity and the flow of protons through the CF(0) complex. The sequence is that of ATP synthase gamma chain from Streptococcus pneumoniae serotype 2 (strain D39 / NCTC 7466).